The following is a 333-amino-acid chain: Anthranilate phosphoribosyltransferase (333 aa).

Residues Gly-81, 84-85 (GN), Thr-89, 91-94 (NIST), 109-117 (KHGNRSVSS), and Ala-121 contribute to the 5-phospho-alpha-D-ribose 1-diphosphate site. Anthranilate is bound at residue Gly-81. Ser-93 contacts Mg(2+). Asn-112 is a binding site for anthranilate. Position 167 (Arg-167) interacts with anthranilate. The Mg(2+) site is built by Asp-225 and Glu-226.

This sequence belongs to the anthranilate phosphoribosyltransferase family. In terms of assembly, homodimer. It depends on Mg(2+) as a cofactor.

It catalyses the reaction N-(5-phospho-beta-D-ribosyl)anthranilate + diphosphate = 5-phospho-alpha-D-ribose 1-diphosphate + anthranilate. It functions in the pathway amino-acid biosynthesis; L-tryptophan biosynthesis; L-tryptophan from chorismate: step 2/5. Catalyzes the transfer of the phosphoribosyl group of 5-phosphorylribose-1-pyrophosphate (PRPP) to anthranilate to yield N-(5'-phosphoribosyl)-anthranilate (PRA). The sequence is that of Anthranilate phosphoribosyltransferase from Haemophilus influenzae (strain ATCC 51907 / DSM 11121 / KW20 / Rd).